The sequence spans 302 residues: 4-diphosphocytidyl-2-C-methyl-D-erythritol kinase (302 aa).

Lys27 is an active-site residue. 110-120 is a binding site for ATP; that stretch reads PMGGGVGGGSS. The active site involves Asp152.

Belongs to the GHMP kinase family. IspE subfamily.

The enzyme catalyses 4-CDP-2-C-methyl-D-erythritol + ATP = 4-CDP-2-C-methyl-D-erythritol 2-phosphate + ADP + H(+). The protein operates within isoprenoid biosynthesis; isopentenyl diphosphate biosynthesis via DXP pathway; isopentenyl diphosphate from 1-deoxy-D-xylulose 5-phosphate: step 3/6. Functionally, catalyzes the phosphorylation of the position 2 hydroxy group of 4-diphosphocytidyl-2C-methyl-D-erythritol. This Mannheimia succiniciproducens (strain KCTC 0769BP / MBEL55E) protein is 4-diphosphocytidyl-2-C-methyl-D-erythritol kinase.